Reading from the N-terminus, the 161-residue chain is Hydrogenase expression/formation protein HoxO (161 aa).

It belongs to the HupG/HyaE family.

This is Hydrogenase expression/formation protein HoxO (hoxO) from Cupriavidus necator (strain ATCC 17699 / DSM 428 / KCTC 22496 / NCIMB 10442 / H16 / Stanier 337) (Ralstonia eutropha).